The chain runs to 57 residues: UPF0509 protein YciZ (57 aa).

This sequence belongs to the UPF0509 family.

This chain is UPF0509 protein YciZ (yciZ), found in Shigella flexneri.